Consider the following 278-residue polypeptide: 4-deoxy-L-threo-5-hexosulose-uronate ketol-isomerase (278 aa).

Residues His-196, His-198, Glu-203, and His-245 each coordinate Zn(2+).

The protein belongs to the KduI family. As to quaternary structure, homohexamer. Zn(2+) is required as a cofactor.

It carries out the reaction 5-dehydro-4-deoxy-D-glucuronate = 3-deoxy-D-glycero-2,5-hexodiulosonate. Its pathway is glycan metabolism; pectin degradation; 2-dehydro-3-deoxy-D-gluconate from pectin: step 4/5. Its function is as follows. Catalyzes the isomerization of 5-dehydro-4-deoxy-D-glucuronate to 3-deoxy-D-glycero-2,5-hexodiulosonate. This is 4-deoxy-L-threo-5-hexosulose-uronate ketol-isomerase from Escherichia coli (strain SMS-3-5 / SECEC).